We begin with the raw amino-acid sequence, 36 residues long: Kappa-theraphotoxin-Pg1a (36 aa).

3 disulfides stabilise this stretch: C4–C19, C11–C24, and C18–C31.

The protein belongs to the neurotoxin 10 (Hwtx-1) family. 44 (Jztx-4) subfamily. As to expression, expressed by the venom gland.

Its subcellular location is the secreted. Functionally, gating modifier of Kv2.1/KCNB1 (IC(50)=5.1 nM), Kv2.2/KCNB2 and Kv4.3/KCND3 channels (IC(50)=39 nM). Acts by shifting the channel activation to more depolarized potentials by stabilizing the resting conformation of the voltage sensor. It completely inhibits opening of the Kv2.1/KCNB1 channel at negative membrane voltages and dramatically shifts channel activation to positive voltages. May act by partitioning into lipid membranes and then by binding the voltage sensor paddle of the channel from a place within the membrane. This chain is Kappa-theraphotoxin-Pg1a, found in Chilobrachys guangxiensis (Chinese earth tiger tarantula).